An 84-amino-acid chain; its full sequence is Large ribosomal subunit protein bL27 (84 aa).

It belongs to the bacterial ribosomal protein bL27 family.

The sequence is that of Large ribosomal subunit protein bL27 from Buchnera aphidicola subsp. Acyrthosiphon pisum (strain Tuc7).